Consider the following 392-residue polypeptide: NDP-glycosyltransferase YjiC (392 aa).

Residues Asn18, Thr229, Ser255, Val278, His293, and 297-301 (NSTME) contribute to the UDP site.

It belongs to the UDP-glycosyltransferase family. As to quaternary structure, monomer.

It catalyses the reaction an NDP-glycose + an acceptor = a glycosylated acceptor + NDP.. With respect to regulation, activity is improved in the presence of Mn(2+), Mg(2+) and Ca(2+), and inhibited by Ni(2+), Zn(2+) and Cu(2+). Functionally, glycosyltransferase that can glycosylate a wide range of substrates, including various flavonoids, phenyl ketones, curcuminoid, lignins, zingerone, triterpenes, stilbene and anthraquinone, using UDP-glucose or ADP-glucose as sugar donor. It also exhibits O-, N- and S-glycosylation activities towards simple aromatics. In vivo, the broad acceptor tolerance of YjiC might function as a detoxification agent against exogenous xenobiotics to make the strain adaptable to the changeable environment. The chain is NDP-glycosyltransferase YjiC (yjiC) from Bacillus subtilis (strain 168).